Here is a 156-residue protein sequence, read N- to C-terminus: Small ribosomal subunit protein uS7 (156 aa).

Belongs to the universal ribosomal protein uS7 family. In terms of assembly, part of the 30S ribosomal subunit. Contacts proteins S9 and S11.

One of the primary rRNA binding proteins, it binds directly to 16S rRNA where it nucleates assembly of the head domain of the 30S subunit. Is located at the subunit interface close to the decoding center, probably blocks exit of the E-site tRNA. This chain is Small ribosomal subunit protein uS7, found in Bradyrhizobium sp. (strain BTAi1 / ATCC BAA-1182).